We begin with the raw amino-acid sequence, 448 residues long: U-box domain-containing protein 30 (448 aa).

A U-box domain is found at Asp63–Leu137. 2 ARM repeats span residues Leu179–Leu219 and Ser221–Glu260.

The catalysed reaction is S-ubiquitinyl-[E2 ubiquitin-conjugating enzyme]-L-cysteine + [acceptor protein]-L-lysine = [E2 ubiquitin-conjugating enzyme]-L-cysteine + N(6)-ubiquitinyl-[acceptor protein]-L-lysine.. The protein operates within protein modification; protein ubiquitination. In terms of biological role, functions as an E3 ubiquitin ligase. This Arabidopsis thaliana (Mouse-ear cress) protein is U-box domain-containing protein 30 (PUB30).